An 839-amino-acid chain; its full sequence is Elongation factor 2 (839 aa).

A tr-type G domain is found at 17-248; sequence ENIRNMSVIA…MGRLWGDSYF (232 aa). GTP contacts are provided by residues 26-33, 156-159, and 211-213; these read AHVDHGKT, NKVD, and SGL. H698 carries the diphthamide modification.

This sequence belongs to the TRAFAC class translation factor GTPase superfamily. Classic translation factor GTPase family. EF-G/EF-2 subfamily. Phosphorylation by EF-2 kinase completely inactivates EF-2.

It localises to the cytoplasm. It catalyses the reaction GTP + H2O = GDP + phosphate + H(+). In terms of biological role, catalyzes the GTP-dependent ribosomal translocation step during translation elongation. During this step, the ribosome changes from the pre-translocational (PRE) to the post-translocational (POST) state as the newly formed A-site-bound peptidyl-tRNA and P-site-bound deacylated tRNA move to the P and E sites, respectively. Catalyzes the coordinated movement of the two tRNA molecules, the mRNA and conformational changes in the ribosome. The sequence is that of Elongation factor 2 (efbA) from Dictyostelium discoideum (Social amoeba).